Consider the following 51-residue polypeptide: Large ribosomal subunit protein eL39 (51 aa).

The protein belongs to the eukaryotic ribosomal protein eL39 family.

The protein is Large ribosomal subunit protein eL39 (RpL39) of Plutella xylostella (Diamondback moth).